The chain runs to 104 residues: Large ribosomal subunit protein bL21 (104 aa).

This sequence belongs to the bacterial ribosomal protein bL21 family. In terms of assembly, part of the 50S ribosomal subunit. Contacts protein L20.

Its function is as follows. This protein binds to 23S rRNA in the presence of protein L20. The sequence is that of Large ribosomal subunit protein bL21 from Thermodesulfovibrio yellowstonii (strain ATCC 51303 / DSM 11347 / YP87).